Consider the following 439-residue polypeptide: Na(+)/H(+) antiporter NhaA 1 (439 aa).

Transmembrane regions (helical) follow at residues 14 to 34, 60 to 80, 98 to 118, 127 to 147, 156 to 176, 179 to 199, 213 to 233, 303 to 323, 335 to 355, 375 to 395, and 408 to 428; these read ITGG…ANLA, ISLH…FIGL, ALPL…YYFF, GWGI…AMVG, IFLS…IAIF, EQIF…LAVA, IGLI…TIAG, HPIS…GVIV, IVLG…FLFA, IIGT…ISDL, and VAVL…LISA.

Belongs to the NhaA Na(+)/H(+) (TC 2.A.33) antiporter family.

The protein localises to the cell inner membrane. The enzyme catalyses Na(+)(in) + 2 H(+)(out) = Na(+)(out) + 2 H(+)(in). In terms of biological role, na(+)/H(+) antiporter that extrudes sodium in exchange for external protons. The polypeptide is Na(+)/H(+) antiporter NhaA 1 (Psychromonas ingrahamii (strain DSM 17664 / CCUG 51855 / 37)).